Here is a 284-residue protein sequence, read N- to C-terminus: Nucleotide-binding protein NMCC_0698 (284 aa).

ATP is bound at residue 8 to 15; it reads GLSGSGKS. Position 58-61 (58-61) interacts with GTP; sequence DVRS.

It belongs to the RapZ-like family.

Its function is as follows. Displays ATPase and GTPase activities. The sequence is that of Nucleotide-binding protein NMCC_0698 from Neisseria meningitidis serogroup C (strain 053442).